A 349-amino-acid chain; its full sequence is S-adenosylmethionine:tRNA ribosyltransferase-isomerase (349 aa).

This sequence belongs to the QueA family. As to quaternary structure, monomer.

It localises to the cytoplasm. The catalysed reaction is 7-aminomethyl-7-carbaguanosine(34) in tRNA + S-adenosyl-L-methionine = epoxyqueuosine(34) in tRNA + adenine + L-methionine + 2 H(+). The protein operates within tRNA modification; tRNA-queuosine biosynthesis. Transfers and isomerizes the ribose moiety from AdoMet to the 7-aminomethyl group of 7-deazaguanine (preQ1-tRNA) to give epoxyqueuosine (oQ-tRNA). In Ruegeria sp. (strain TM1040) (Silicibacter sp.), this protein is S-adenosylmethionine:tRNA ribosyltransferase-isomerase.